The chain runs to 864 residues: DNA double-strand break repair Rad50 ATPase (864 aa).

Residues 32 to 38 (NGAGKSS) and Gln131 each bind ATP. 2 coiled-coil regions span residues 176-319 (RELD…EKAI) and 376-413 (DIDK…EKNE). One can recognise a Zinc-hook domain in the interval 380 to 478 (VNSLEQKVEE…ELNKIEREYR (99 aa)). Zn(2+) contacts are provided by Cys426 and Cys429. A coiled-coil region spans residues 440 to 697 (KIIKEAKSYI…DREKIINAIN (258 aa)).

It belongs to the SMC family. RAD50 subfamily. In terms of assembly, homodimer. Forms a heterotetramer composed of two Mre11 subunits and two Rad50 subunits. Requires Zn(2+) as cofactor.

In terms of biological role, part of the Rad50/Mre11 complex, which is involved in the early steps of DNA double-strand break (DSB) repair. The complex may facilitate opening of the processed DNA ends to aid in the recruitment of HerA and NurA. Rad50 controls the balance between DNA end bridging and DNA resection via ATP-dependent structural rearrangements of the Rad50/Mre11 complex. This chain is DNA double-strand break repair Rad50 ATPase, found in Saccharolobus solfataricus (strain ATCC 35092 / DSM 1617 / JCM 11322 / P2) (Sulfolobus solfataricus).